A 66-amino-acid chain; its full sequence is ATP synthase F(0) complex subunit 8 (66 aa).

A helical transmembrane segment spans residues 8–24 (TWLTMILSMFLTLFIIF). Lys-54 is modified (N6-acetyllysine; alternate). The residue at position 54 (Lys-54) is an N6-succinyllysine; alternate. Lys-57 carries the post-translational modification N6-acetyllysine.

This sequence belongs to the ATPase protein 8 family. In terms of assembly, component of the ATP synthase complex composed at least of ATP5F1A/subunit alpha, ATP5F1B/subunit beta, ATP5MC1/subunit c (homooctomer), MT-ATP6/subunit a, MT-ATP8/subunit 8, ATP5ME/subunit e, ATP5MF/subunit f, ATP5MG/subunit g, ATP5MK/subunit k, ATP5MJ/subunit j, ATP5F1C/subunit gamma, ATP5F1D/subunit delta, ATP5F1E/subunit epsilon, ATP5PF/subunit F6, ATP5PB/subunit b, ATP5PD/subunit d, ATP5PO/subunit OSCP. ATP synthase complex consists of a soluble F(1) head domain (subunits alpha(3) and beta(3)) - the catalytic core - and a membrane F(0) domain - the membrane proton channel (subunits c, a, 8, e, f, g, k and j). These two domains are linked by a central stalk (subunits gamma, delta, and epsilon) rotating inside the F1 region and a stationary peripheral stalk (subunits F6, b, d, and OSCP). Interacts with PRICKLE3.

It localises to the mitochondrion membrane. Its function is as follows. Subunit 8, of the mitochondrial membrane ATP synthase complex (F(1)F(0) ATP synthase or Complex V) that produces ATP from ADP in the presence of a proton gradient across the membrane which is generated by electron transport complexes of the respiratory chain. ATP synthase complex consist of a soluble F(1) head domain - the catalytic core - and a membrane F(1) domain - the membrane proton channel. These two domains are linked by a central stalk rotating inside the F(1) region and a stationary peripheral stalk. During catalysis, ATP synthesis in the catalytic domain of F(1) is coupled via a rotary mechanism of the central stalk subunits to proton translocation. In vivo, can only synthesize ATP although its ATP hydrolase activity can be activated artificially in vitro. Part of the complex F(0) domain. The sequence is that of ATP synthase F(0) complex subunit 8 from Bos mutus grunniens (Wild yak).